The primary structure comprises 1228 residues: Probable phospholipid-transporting ATPase 5 (1228 aa).

At methionine 1 to phenylalanine 74 the chain is on the cytoplasmic side. Residues proline 75–leucine 96 traverse the membrane as a helical segment. Residues serine 97–proline 100 are Extracellular-facing. A helical transmembrane segment spans residues leucine 101–lysine 123. At glutamate 124–isoleucine 305 the chain is on the cytoplasmic side. A helical transmembrane segment spans residues isoleucine 306 to glutamate 327. The Extracellular portion of the chain corresponds to threonine 328–histidine 359. Residues leucine 360–valine 377 traverse the membrane as a helical segment. The Cytoplasmic segment spans residues serine 378–alanine 934. Aspartate 425 (4-aspartylphosphate intermediate) is an active-site residue. Lysine 616 is covalently cross-linked (Glycyl lysine isopeptide (Lys-Gly) (interchain with G-Cter in ubiquitin)). Aspartate 879 and aspartate 883 together coordinate Mg(2+). The chain crosses the membrane as a helical span at residues glutamine 935 to phenylalanine 954. Residues glutamate 955 to aspartate 968 lie on the Extracellular side of the membrane. The helical transmembrane segment at tyrosine 969–valine 988 threads the bilayer. The Cytoplasmic portion of the chain corresponds to phenylalanine 989–arginine 1018. The chain crosses the membrane as a helical span at residues isoleucine 1019–isoleucine 1041. At tyrosine 1042–aspartate 1054 the chain is on the extracellular side. The helical transmembrane segment at methionine 1055–threonine 1077 threads the bilayer. Residues methionine 1078–tryptophan 1083 lie on the Cytoplasmic side of the membrane. Residues isoleucine 1084–serine 1104 form a helical membrane-spanning segment. Topologically, residues methionine 1105–isoleucine 1117 are extracellular. Residues leucine 1118–histidine 1146 form a helical membrane-spanning segment. The Cytoplasmic segment spans residues isoleucine 1147–leucine 1228.

This sequence belongs to the cation transport ATPase (P-type) (TC 3.A.3) family. Type IV subfamily.

The protein localises to the membrane. The enzyme catalyses ATP + H2O + phospholipidSide 1 = ADP + phosphate + phospholipidSide 2.. Its function is as follows. Involved in transport of phospholipids. The polypeptide is Probable phospholipid-transporting ATPase 5 (Arabidopsis thaliana (Mouse-ear cress)).